Reading from the N-terminus, the 690-residue chain is Dual specificity protein kinase lkh1 (690 aa).

A disordered region spans residues 39–70; the sequence is PNLPPPFSVHQLQSFVPPQPPSSSSPSTTGTV. The Protein kinase domain occupies 362–682; that stretch reads YTVVRLLGHG…AKEALWHPFF (321 aa). Residues 368–376 and lysine 391 each bind ATP; that span reads LGHGTFGKV. The active-site Proton acceptor is aspartate 488.

It belongs to the protein kinase superfamily. CMGC Ser/Thr protein kinase family. Lammer subfamily. In terms of processing, autophosphorylates on all three types of residues.

It catalyses the reaction L-seryl-[protein] + ATP = O-phospho-L-seryl-[protein] + ADP + H(+). It carries out the reaction L-threonyl-[protein] + ATP = O-phospho-L-threonyl-[protein] + ADP + H(+). The enzyme catalyses L-tyrosyl-[protein] + ATP = O-phospho-L-tyrosyl-[protein] + ADP + H(+). Its function is as follows. Protein kinase that may act as a negative regulator of filamentous growth and flocculation. Appears to have a role in normal cell wall and septum formation and in cell separation. May have antagonistic function in the regulation of beta-glucan distribution between the sites for cell wall and septum assembly. In Schizosaccharomyces pombe (strain 972 / ATCC 24843) (Fission yeast), this protein is Dual specificity protein kinase lkh1 (lkh1).